The sequence spans 622 residues: MALLQISEPGMAPAPHQRRLAVGIDLGTTNSLVAAVRNSIPEALPDDAGRVLLPSVVRYLDKGGRRIGHAAKEEAAIDPRNTIVSVKRFMGRGKAEVEGAANAPYEFVDAPGMVQIRTVDGVKSPVEVSAEILATLRQRAEDTLGDDLVGAVITVPAYFDDAQRQATKDAARLAGLNVLRLLNEPTAAAIAYGLDNGAEGLYAVYDLGGGTFDLSILKLTKGVFEVLAAGGDSALGGDDFDHLLFEHVLAQAGLEAAALAPEDVRLLLDRVRGAKEALSAAPQARVDVKLSTGEKLAQTITRDTFAALVEPLVQRTLGPTRKALRDAQVSAADIKGVVLVGGATRMPVIRDAVAKYFGQPPLVNLDPDQVVALGAAIQADLLAGNRSGGDDWLLLDVIPLSLGVETMGGLVEKIIPRNSTIPVARAQEFTTFKDGQTAMAIHVVQGERELVSDCRSLARFELRGIPPMTAGAARIRVTYQVDADGLLSVFAREQHSGVEASVVVKPSYGLGDDDIARMLEDSFKTAEVDMRARALREAQVEAQRLVEATEAALVADGDLLDASERATVDALVASLRALAPGDDADAIDAATKALAEGTDEFAARRMDKSIKRALAGRKLDEI.

This sequence belongs to the heat shock protein 70 family.

Chaperone involved in the maturation of iron-sulfur cluster-containing proteins. Has a low intrinsic ATPase activity which is markedly stimulated by HscB. The polypeptide is Chaperone protein HscA homolog (Burkholderia pseudomallei (strain 668)).